The sequence spans 379 residues: UDP-N-acetylglucosamine--N-acetylmuramyl-(pentapeptide) pyrophosphoryl-undecaprenol N-acetylglucosamine transferase (379 aa).

UDP-N-acetyl-alpha-D-glucosamine-binding positions include 17–19 (TGG), Asn128, Arg169, Ser197, and Gln298.

Belongs to the glycosyltransferase 28 family. MurG subfamily.

Its subcellular location is the cell inner membrane. It carries out the reaction di-trans,octa-cis-undecaprenyl diphospho-N-acetyl-alpha-D-muramoyl-L-alanyl-D-glutamyl-meso-2,6-diaminopimeloyl-D-alanyl-D-alanine + UDP-N-acetyl-alpha-D-glucosamine = di-trans,octa-cis-undecaprenyl diphospho-[N-acetyl-alpha-D-glucosaminyl-(1-&gt;4)]-N-acetyl-alpha-D-muramoyl-L-alanyl-D-glutamyl-meso-2,6-diaminopimeloyl-D-alanyl-D-alanine + UDP + H(+). It functions in the pathway cell wall biogenesis; peptidoglycan biosynthesis. Cell wall formation. Catalyzes the transfer of a GlcNAc subunit on undecaprenyl-pyrophosphoryl-MurNAc-pentapeptide (lipid intermediate I) to form undecaprenyl-pyrophosphoryl-MurNAc-(pentapeptide)GlcNAc (lipid intermediate II). The chain is UDP-N-acetylglucosamine--N-acetylmuramyl-(pentapeptide) pyrophosphoryl-undecaprenol N-acetylglucosamine transferase from Brucella abortus (strain S19).